The chain runs to 150 residues: Troponin C, isoform 2B (150 aa).

An N-acetylmethionine modification is found at Met1. 4 consecutive EF-hand domains span residues 7–42 (EQLS…MGVK), 43–78 (ISEK…FLIE), 83–118 (ALKA…LDNR), and 119–150 (LTEE…MMNG). Positions 56, 58, 60, 62, and 67 each coordinate Ca(2+). Ca(2+) is bound by residues Asp132, Asp134, Ser136, Thr138, and Glu143.

It belongs to the troponin C family.

Troponin is the central regulatory protein of striated muscle contraction. Tn consists of three components: Tn-I which is the inhibitor of actomyosin ATPase, Tn-T which contains the binding site for tropomyosin and Tn-C. The binding of calcium to Tn-C abolishes the inhibitory action of Tn on actin filaments. This is Troponin C, isoform 2B from Homarus americanus (American lobster).